The primary structure comprises 125 residues: Small ribosomal subunit protein eS8 (125 aa).

The tract at residues 1–35 (MQWQGRSVRKPSGGRYHTSQGKKRTEIGRAPAETH) is disordered.

Belongs to the eukaryotic ribosomal protein eS8 family. Part of the 30S ribosomal subunit.

This is Small ribosomal subunit protein eS8 from Methanoculleus marisnigri (strain ATCC 35101 / DSM 1498 / JR1).